The sequence spans 174 residues: Crossover junction endodeoxyribonuclease RuvC (174 aa).

Active-site residues include D8, E67, and D139. The Mg(2+) site is built by D8, E67, and D139.

Belongs to the RuvC family. In terms of assembly, homodimer which binds Holliday junction (HJ) DNA. The HJ becomes 2-fold symmetrical on binding to RuvC with unstacked arms; it has a different conformation from HJ DNA in complex with RuvA. In the full resolvosome a probable DNA-RuvA(4)-RuvB(12)-RuvC(2) complex forms which resolves the HJ. Mg(2+) serves as cofactor.

The protein localises to the cytoplasm. The catalysed reaction is Endonucleolytic cleavage at a junction such as a reciprocal single-stranded crossover between two homologous DNA duplexes (Holliday junction).. The RuvA-RuvB-RuvC complex processes Holliday junction (HJ) DNA during genetic recombination and DNA repair. Endonuclease that resolves HJ intermediates. Cleaves cruciform DNA by making single-stranded nicks across the HJ at symmetrical positions within the homologous arms, yielding a 5'-phosphate and a 3'-hydroxyl group; requires a central core of homology in the junction. The consensus cleavage sequence is 5'-(A/T)TT(C/G)-3'. Cleavage occurs on the 3'-side of the TT dinucleotide at the point of strand exchange. HJ branch migration catalyzed by RuvA-RuvB allows RuvC to scan DNA until it finds its consensus sequence, where it cleaves and resolves the cruciform DNA. This is Crossover junction endodeoxyribonuclease RuvC from Ectopseudomonas mendocina (strain ymp) (Pseudomonas mendocina).